Here is a 351-residue protein sequence, read N- to C-terminus: Nicotinate-nucleotide--dimethylbenzimidazole phosphoribosyltransferase (351 aa).

Glu-317 (proton acceptor) is an active-site residue.

The protein belongs to the CobT family.

It carries out the reaction 5,6-dimethylbenzimidazole + nicotinate beta-D-ribonucleotide = alpha-ribazole 5'-phosphate + nicotinate + H(+). The protein operates within nucleoside biosynthesis; alpha-ribazole biosynthesis; alpha-ribazole from 5,6-dimethylbenzimidazole: step 1/2. Functionally, catalyzes the synthesis of alpha-ribazole-5'-phosphate from nicotinate mononucleotide (NAMN) and 5,6-dimethylbenzimidazole (DMB). The polypeptide is Nicotinate-nucleotide--dimethylbenzimidazole phosphoribosyltransferase (Pseudomonas aeruginosa (strain LESB58)).